A 327-amino-acid chain; its full sequence is Phenylalanine--tRNA ligase alpha subunit (327 aa).

Glu252 contacts Mg(2+).

Belongs to the class-II aminoacyl-tRNA synthetase family. Phe-tRNA synthetase alpha subunit type 1 subfamily. As to quaternary structure, tetramer of two alpha and two beta subunits. Requires Mg(2+) as cofactor.

It is found in the cytoplasm. The catalysed reaction is tRNA(Phe) + L-phenylalanine + ATP = L-phenylalanyl-tRNA(Phe) + AMP + diphosphate + H(+). This chain is Phenylalanine--tRNA ligase alpha subunit, found in Aeromonas salmonicida (strain A449).